Reading from the N-terminus, the 291-residue chain is Ribosome biogenesis protein BRX1 (291 aa).

The Brix domain maps to 31–232 (QRTLLISSRG…VILILEGSFG (202 aa)). Ser285 carries the phosphoserine modification.

Belongs to the BRX1 family. In terms of assembly, part of a complex that includes BRX1, RPF1, RPF2 and SSF1 or SSF2.

It localises to the nucleus. It is found in the nucleolus. Required for biogenesis of the 60S ribosomal subunit. This is Ribosome biogenesis protein BRX1 (BRX1) from Saccharomyces cerevisiae (strain ATCC 204508 / S288c) (Baker's yeast).